Here is a 791-residue protein sequence, read N- to C-terminus: Lon protease (791 aa).

Residues 28–223 form the Lon N-terminal domain; that stretch reads LPVVVISEIM…YILQDIQSLL (196 aa). Residue 374–381 coordinates ATP; it reads GPPGVGKT. The region spanning 610–791 is the Lon proteolytic domain; the sequence is KEKIGSTNGL…SDVFSQVFVV (182 aa). Active-site residues include Ser-697 and Lys-740.

Belongs to the peptidase S16 family. In terms of assembly, homohexamer. Organized in a ring with a central cavity.

It is found in the cytoplasm. It catalyses the reaction Hydrolysis of proteins in presence of ATP.. Its function is as follows. ATP-dependent serine protease that mediates the selective degradation of mutant and abnormal proteins as well as certain short-lived regulatory proteins. Required for cellular homeostasis and for survival from DNA damage and developmental changes induced by stress. Degrades polypeptides processively to yield small peptide fragments that are 5 to 10 amino acids long. Binds to DNA in a double-stranded, site-specific manner. The protein is Lon protease of Aster yellows witches'-broom phytoplasma (strain AYWB).